Reading from the N-terminus, the 94-residue chain is Pyrimidine/purine nucleoside phosphorylase (94 aa).

Belongs to the nucleoside phosphorylase PpnP family.

The enzyme catalyses a purine D-ribonucleoside + phosphate = a purine nucleobase + alpha-D-ribose 1-phosphate. The catalysed reaction is adenosine + phosphate = alpha-D-ribose 1-phosphate + adenine. It catalyses the reaction cytidine + phosphate = cytosine + alpha-D-ribose 1-phosphate. It carries out the reaction guanosine + phosphate = alpha-D-ribose 1-phosphate + guanine. The enzyme catalyses inosine + phosphate = alpha-D-ribose 1-phosphate + hypoxanthine. The catalysed reaction is thymidine + phosphate = 2-deoxy-alpha-D-ribose 1-phosphate + thymine. It catalyses the reaction uridine + phosphate = alpha-D-ribose 1-phosphate + uracil. It carries out the reaction xanthosine + phosphate = alpha-D-ribose 1-phosphate + xanthine. Its function is as follows. Catalyzes the phosphorolysis of diverse nucleosides, yielding D-ribose 1-phosphate and the respective free bases. Can use uridine, adenosine, guanosine, cytidine, thymidine, inosine and xanthosine as substrates. Also catalyzes the reverse reactions. The polypeptide is Pyrimidine/purine nucleoside phosphorylase (Escherichia coli (strain ATCC 8739 / DSM 1576 / NBRC 3972 / NCIMB 8545 / WDCM 00012 / Crooks)).